A 2523-amino-acid chain; its full sequence is uncharacterized protein (2523 aa).

Belongs to the mycobacterial PPE family.

Functionally, probably plays a role in host phagosome maturation arrest. This is an uncharacterized protein from Mycobacterium tuberculosis (strain ATCC 25618 / H37Rv).